Reading from the N-terminus, the 88-residue chain is Large ribosomal subunit protein bL27 (88 aa).

The segment at 1–24 (MAHKKGTGSTRNGRDSNSKRLGVK) is disordered.

The protein belongs to the bacterial ribosomal protein bL27 family.

In Prochlorococcus marinus (strain MIT 9303), this protein is Large ribosomal subunit protein bL27.